Consider the following 930-residue polypeptide: MEYERRGGRGDRTGRYGATDRSQDDGGENRSRDHDYRDMDYRSYPREYGSQEGKHDYDDSSEEQSAEDSYEASPGSETQRRRRRRHRHSPTGPPGFPRDGDYRDQDYRTEQGEEEEEEEDEEEEEKASNIVMLRMLPQAATEDDIRGQLQSHGVQAREVRLMRNKSSGQSRGFAFVEFSHLQDATRWMEANQHSLNILGQKVSMHYSDPKPKINEDWLCNKCGVQNFKRREKCFKCGVPKSEAEQKLPLGTRLDQQTLPLGGRELSQGLLPLPQPYQAQGVLASQALSQGSEPSSENANDTIILRNLNPHSTMDSILGALAPYAVLSSSNVRVIKDKQTQLNRGFAFIQLSTIVEAAQLLQILQALHPPLTIDGKTINVEFAKGSKRDMASNEGSRISAASVASTAIAAAQWAISQASQGGEGTWATSEEPPVDYSYYQQDEGYGNSQGTESSLYAHGYLKGTKGPGITGTKGDPTGAGPEASLEPGADSVSMQAFSRAQPGAAPGIYQQSAEASSSQGTAANSQSYTIMSPAVLKSELQSPTHPSSALPPATSPTAQESYSQYPVPDVSTYQYDETSGYYYDPQTGLYYDPNSQYYYNAQSQQYLYWDGERRTYVPALEQSADGHKETGAPSKEGKEKKEKHKTKTAQQIAKDMERWARSLNKQKENFKNSFQPISSLRDDERRESATADAGYAILEKKGALAERQHTSMDLPKLASDDRPSPPRGLVAAYSGESDSEEEQERGGPEREEKLTDWQKLACLLCRRQFPSKEALIRHQQLSGLHKQNLEIHRRAHLSENELEALEKNDMEQMKYRDRAAERREKYGIPEPPEPKRRKYGGISTASVDFEQPTRDGLGSDNIGSRMLQAMGWKEGSGLGRKKQGIVTPIEAQTRVRGSGLGARGSSYGVTSTESYKETLHKTMVTRFNEAQ.

2 stretches are compositionally biased toward basic and acidic residues: residues 1–14 and 21–45; these read MEYE…DRTG and RSQD…RSYP. The disordered stretch occupies residues 1 to 127; sequence MEYERRGGRG…EEDEEEEEKA (127 aa). An N-acetylserine modification is found at E2. Residues R30, S61, and S89 each carry the phosphoserine modification. A compositionally biased stretch (acidic residues) spans 59–70; that stretch reads DSSEEQSAEDSY. A compositionally biased stretch (basic residues) spans 80-89; that stretch reads RRRRRRHRHS. Over residues 98–111 the composition is skewed to basic and acidic residues; it reads RDGDYRDQDYRTEQ. The span at 112 to 125 shows a compositional bias: acidic residues; the sequence is GEEEEEEEDEEEEE. Residues 129–209 enclose the RRM 1 domain; the sequence is NIVMLRMLPQ…QKVSMHYSDP (81 aa). The RanBP2-type zinc finger occupies 212-242; sequence KINEDWLCNKCGVQNFKRREKCFKCGVPKSE. In terms of domain architecture, RRM 2 spans 300–384; that stretch reads DTIILRNLNP…KTINVEFAKG (85 aa). K383 is subject to N6-acetyllysine. Disordered regions lie at residues 466–524, 537–569, 620–685, and 700–753; these read PGIT…AANS, SELQ…VPDV, EQSA…DERR, and KGAL…EEKL. A compositionally biased stretch (polar residues) spans 508 to 524; sequence YQQSAEASSSQGTAANS. Low complexity predominate over residues 541–557; it reads SPTHPSSALPPATSPTA. 3 stretches are compositionally biased toward basic and acidic residues: residues 623–639, 653–669, and 700–709; these read ADGH…GKEK, KDME…KENF, and KGALAERQHT. Residues S718, S723, S733, S736, and S738 each carry the phosphoserine modification. Basic and acidic residues predominate over residues 743–753; sequence ERGGPEREEKL. The segment at 759–784 adopts a C2H2-type; atypical zinc-finger fold; sequence LACLLCRRQFPSKEALIRHQQLSGLH. Phosphoserine is present on residues S781 and S797. The segment covering 815–826 has biased composition (basic and acidic residues); it reads RDRAAERREKYG. Positions 815–861 are disordered; it reads RDRAAERREKYGIPEPPEPKRRKYGGISTASVDFEQPTRDGLGSDNI. S845 carries the phosphoserine modification. The G-patch domain maps to 858-904; that stretch reads SDNIGSRMLQAMGWKEGSGLGRKKQGIVTPIEAQTRVRGSGLGARGS. Omega-N-methylarginine is present on R902.

As to quaternary structure, associates with the spliceosome. Component of a large chromatin remodeling complex, at least composed of MYSM1, PCAF, RBM10 and KIF11/TRIP5.

The protein localises to the nucleus. Functionally, binds to ssRNA containing the consensus sequence 5'-AGGUAA-3'. May be involved in post-transcriptional processing, most probably in mRNA splicing. Binds to RNA homopolymers, with a preference for poly(G) and poly(U) and little for poly(A). May bind to specific miRNA hairpins. This chain is RNA-binding protein 10, found in Homo sapiens (Human).